Here is a 214-residue protein sequence, read N- to C-terminus: Octanoyltransferase (214 aa).

The BPL/LPL catalytic domain maps to 34–214 (GLQKELVWLL…KFNEIFSSFN (181 aa)). Substrate contacts are provided by residues 73-80 (RGGKYTYH), 145-147 (AFG), and 158-160 (GVS). Residue Cys-176 is the Acyl-thioester intermediate of the active site.

It belongs to the LipB family.

The protein localises to the cytoplasm. The catalysed reaction is octanoyl-[ACP] + L-lysyl-[protein] = N(6)-octanoyl-L-lysyl-[protein] + holo-[ACP] + H(+). It functions in the pathway protein modification; protein lipoylation via endogenous pathway; protein N(6)-(lipoyl)lysine from octanoyl-[acyl-carrier-protein]: step 1/2. In terms of biological role, catalyzes the transfer of endogenously produced octanoic acid from octanoyl-acyl-carrier-protein onto the lipoyl domains of lipoate-dependent enzymes. Lipoyl-ACP can also act as a substrate although octanoyl-ACP is likely to be the physiological substrate. This Ehrlichia canis (strain Jake) protein is Octanoyltransferase.